The primary structure comprises 471 residues: MSTTSMILTKKNIIILSIIIITIIAYQFYITSPQSFPSSNTITNTINTSGKGLDYTELLNLQKDLKAQQTEIRKQLEQLKYSINDINQNQNENQNQINNEYNNNKLNDEQENNNNNNYNNNNNNNNNELINYKERIKKKSKEQPNTCIPVEGKLLCLPNFIVIGTMKSGTTFLDYYLQKHPQIAHHSKKEIWYFNSYYANGIEWYAKHFEQYTSLENQKLIGEATPFYINNPNTAPRLFTTLKNAKLILLLRDPVERSLSQYHFSIQWLKRNKSPPLEYSFEHLIHEEADVIETCIRGHERYKEAFKQRKEIEKNGGGGLLNDNTSGEEFNLVDPFYTLHSEKNWTFYKDCIRCDKCFQIGSILHTSGHPTFGMLAKSLYFEQLDYWLNFFPLEQIHIIRYEDISSQPESVLSELEDFLDINHIDYGEFKPRNVVQHDPMNQEIKSYLINYFKQSNEKLYNLLNRDFKWQN.

Residues 1–12 (MSTTSMILTKKN) lie on the Cytoplasmic side of the membrane. The chain crosses the membrane as a helical; Signal-anchor for type II membrane protein span at residues 13–33 (IIILSIIIITIIAYQFYITSP). Residues 34–471 (QSFPSSNTIT…LLNRDFKWQN (438 aa)) are Lumenal-facing. A glycan (N-linked (GlcNAc...) asparagine) is linked at Asn-47. 2 stretches are compositionally biased toward low complexity: residues 89 to 105 (NQNENQNQINNEYNNNK) and 112 to 127 (NNNNNNYNNNNNNNNN). Residues 89–127 (NQNENQNQINNEYNNNKLNDEQENNNNNNYNNNNNNNNN) form a disordered region. Residues 167–172 (KSGTTF), Arg-252, and Ser-260 contribute to the 3'-phosphoadenylyl sulfate site. 2 N-linked (GlcNAc...) asparagine glycosylation sites follow: Asn-324 and Asn-344. Tyr-348 contributes to the 3'-phosphoadenylyl sulfate binding site.

It belongs to the sulfotransferase 1 family.

Its subcellular location is the membrane. Its function is as follows. Sulfotransferase involved in intracellular killing of bacteria. This chain is Membrane-associated sulfotransferase kil1 (kil1), found in Dictyostelium discoideum (Social amoeba).